The sequence spans 279 residues: Diaminopimelate epimerase (279 aa).

Positions 11 and 72 each coordinate substrate. The active-site Proton donor is the Cys81. Residues 82 to 83, Asn187, and 205 to 206 contribute to the substrate site; these read GN and ER. Cys215 acts as the Proton acceptor in catalysis. 216-217 contacts substrate; the sequence is GT.

This sequence belongs to the diaminopimelate epimerase family. As to quaternary structure, homodimer.

The protein resides in the cytoplasm. The catalysed reaction is (2S,6S)-2,6-diaminopimelate = meso-2,6-diaminopimelate. It functions in the pathway amino-acid biosynthesis; L-lysine biosynthesis via DAP pathway; DL-2,6-diaminopimelate from LL-2,6-diaminopimelate: step 1/1. Catalyzes the stereoinversion of LL-2,6-diaminopimelate (L,L-DAP) to meso-diaminopimelate (meso-DAP), a precursor of L-lysine and an essential component of the bacterial peptidoglycan. In Aquifex aeolicus (strain VF5), this protein is Diaminopimelate epimerase.